Consider the following 267-residue polypeptide: Endonuclease NucS (267 aa).

Belongs to the NucS endonuclease family.

The protein resides in the cytoplasm. Cleaves both 3' and 5' ssDNA extremities of branched DNA structures. This chain is Endonuclease NucS, found in Pyrococcus furiosus (strain ATCC 43587 / DSM 3638 / JCM 8422 / Vc1).